Reading from the N-terminus, the 246-residue chain is Ribonuclease PH (246 aa).

Residues arginine 91 and 129-131 (GTR) contribute to the phosphate site.

The protein belongs to the RNase PH family. As to quaternary structure, homohexameric ring arranged as a trimer of dimers.

The catalysed reaction is tRNA(n+1) + phosphate = tRNA(n) + a ribonucleoside 5'-diphosphate. Its function is as follows. Phosphorolytic 3'-5' exoribonuclease that plays an important role in tRNA 3'-end maturation. Removes nucleotide residues following the 3'-CCA terminus of tRNAs; can also add nucleotides to the ends of RNA molecules by using nucleoside diphosphates as substrates, but this may not be physiologically important. Probably plays a role in initiation of 16S rRNA degradation (leading to ribosome degradation) during starvation. This is Ribonuclease PH from Burkholderia cenocepacia (strain ATCC BAA-245 / DSM 16553 / LMG 16656 / NCTC 13227 / J2315 / CF5610) (Burkholderia cepacia (strain J2315)).